The sequence spans 126 residues: Glycine cleavage system H protein (126 aa).

Residues 22–103 enclose the Lipoyl-binding domain; that stretch reads KAYIGITDYA…PYGSWMALVE (82 aa). Lys-63 bears the N6-lipoyllysine mark.

The protein belongs to the GcvH family. The glycine cleavage system is composed of four proteins: P, T, L and H. Requires (R)-lipoate as cofactor.

Functionally, the glycine cleavage system catalyzes the degradation of glycine. The H protein shuttles the methylamine group of glycine from the P protein to the T protein. This Thermoanaerobacter sp. (strain X514) protein is Glycine cleavage system H protein.